Consider the following 212-residue polypeptide: Ribonuclease HII (212 aa).

Residues 1–206 (MILVGIDEAG…LQDIAPNYYI (206 aa)) enclose the RNase H type-2 domain. The a divalent metal cation site is built by Asp-7, Glu-8, and Asp-104.

It belongs to the RNase HII family. It depends on Mn(2+) as a cofactor. Mg(2+) is required as a cofactor.

It localises to the cytoplasm. The catalysed reaction is Endonucleolytic cleavage to 5'-phosphomonoester.. Endonuclease that specifically degrades the RNA of RNA-DNA hybrids. In Sulfolobus acidocaldarius (strain ATCC 33909 / DSM 639 / JCM 8929 / NBRC 15157 / NCIMB 11770), this protein is Ribonuclease HII.